We begin with the raw amino-acid sequence, 159 residues long: Protein C2 (159 aa).

The Nuclear localization signal signature appears at K43 to A60. Residues C65–H81 fold into a zinc finger. The disordered stretch occupies residues P102–L139. Over residues H110 to N124 the composition is skewed to low complexity.

This sequence belongs to the geminiviridae transcriptional activator protein family. Monomer. Suppress local silencing by interacting with and inactivating host adenosine kinase 2 (ADK2) in the cytoplasm. Interacts with and inhibits host SNF1 kinase.

It localises to the host cytoplasm. In terms of biological role, acts as a suppressor of RNA-mediated gene silencing, also known as post-transcriptional gene silencing (PTGS), a mechanism of plant viral defense that limits the accumulation of viral RNAs. Suppresses the host RNA silencing by inhibiting adenosine kinase 2 (ADK2), a kinase involved in a general methylation pathway. Also suppresses the host basal defense by interacting with and inhibiting SNF1 kinase, a key regulator of cell metabolism implicated in innate antiviral defense. Determines pathogenicity. In Tomato pseudo-curly top virus (TPCTV), this protein is Protein C2.